Reading from the N-terminus, the 113-residue chain is U11-theraphotoxin-Hhn1a (113 aa).

The N-terminal stretch at 1 to 21 (MNTVRVTFLLVFVLAVSLGQA) is a signal peptide. The propeptide occupies 22–74 (DKDENRMEVQEKTEQGKSYLDFAENLLLQKLEELEAKLLEEDSEESRNSRQKR). Residues 61 to 83 (EEDSEESRNSRQKRCIGEGVPCD) are disordered. Disulfide bonds link cysteine 75-cysteine 90, cysteine 82-cysteine 95, and cysteine 89-cysteine 110.

It belongs to the neurotoxin 14 (magi-1) family. 01 (HNTX-16) subfamily. As to expression, expressed by the venom gland.

The protein resides in the secreted. In terms of biological role, probable ion channel inhibitor. In Cyriopagopus hainanus (Chinese bird spider), this protein is U11-theraphotoxin-Hhn1a.